The following is a 249-amino-acid chain: MITVKNIRKAFKDLVVLDGIDLEVKRGEVVAIIGPSGSGKSTLLRCLNLLERPDQGLIEIGEAKLNAEKFTRKEAHRLRQQTAMVFQNYNLFKNKTALQNITEALIVAQHKPRDEAKRIGMEILKQVGLEHKADSYPITMSGGQQQRIGIARALAVNPHAILLDEPTSALDPELVTGVLQVIKSIAEKQTTMIIVTHEMAFAKEVADQVIFMADGHIIEQGTPEELFDHPKNERTKRFIKQVGEPAELI.

An ABC transporter domain is found at 2–239; the sequence is ITVKNIRKAF…PKNERTKRFI (238 aa). An ATP-binding site is contributed by 34–41; that stretch reads GPSGSGKS.

This sequence belongs to the ABC transporter superfamily. In terms of assembly, the complex is composed of two ATP-binding proteins (YxeO), two transmembrane proteins (YxeN) and a solute-binding protein (YxeM).

Its subcellular location is the cell membrane. Functionally, probably part of the ABC transporter complex YxeMNO that could be involved in amino-acid import. May transport S-methylcysteine. Responsible for energy coupling to the transport system. This is Probable amino-acid import ATP-binding protein YxeO (yxeO) from Bacillus subtilis (strain 168).